The chain runs to 930 residues: A disintegrin and metalloproteinase with thrombospondin motifs 5 (930 aa).

The N-terminal stretch at 1 to 16 (MLLGWASLLLCAFRLP) is a signal peptide. Positions 17 to 261 (LAAVGPAATP…PQTWWRRRRR (245 aa)) are excised as a propeptide. 2 disordered regions span residues 24–69 (ATPA…QRRR) and 206–231 (RASC…PSGR). Positions 31 to 42 (AGQPPTAAAAAQ) are enriched in low complexity. Over residues 46 to 59 (RQGEEVQERAEPPG) the composition is skewed to basic and acidic residues. A Cysteine switch motif is present at residues 207 to 214 (ASCETPAS). A Zn(2+)-binding site is contributed by Cys-209. The Peptidase M12B domain maps to 267–476 (RQVELLLVAD…GHGNCLLDLP (210 aa)). 8 cysteine pairs are disulfide-bonded: Cys-342–Cys-394, Cys-371–Cys-376, Cys-388–Cys-471, Cys-426–Cys-455, Cys-497–Cys-519, Cys-508–Cys-529, Cys-514–Cys-548, and Cys-542–Cys-553. His-410 lines the Zn(2+) pocket. Residue Glu-411 is part of the active site. 2 residues coordinate Zn(2+): His-414 and His-420. One can recognise a Disintegrin domain in the interval 485-566 (ELPGQTYDAT…TKKKYYSTSS (82 aa)). An N-linked (GlcNAc...) asparagine glycan is attached at Asn-498. Residues 567 to 622 (HGNWGSWGSWGQCSRSCGGGVQFAYRHCNNPAPRNNGRYCTGKRAIYRSCSLMPCP) form the TSP type-1 1 domain. 2 C-linked (Man) tryptophan glycosylation sites follow: Trp-570 and Trp-573. 3 disulfide bridges follow: Cys-579–Cys-616, Cys-583–Cys-621, and Cys-594–Cys-606. O-linked (Fuc...) serine glycosylation occurs at Ser-582. 3 N-linked (GlcNAc...) asparagine glycosylation sites follow: Asn-728, Asn-802, and Asn-807. The interval 732-874 (TKIVGTFNKK…HGSNKVGSHT (143 aa)) is spacer. Residues 875–929 (SQPQWVTGPWLACSRTCDTGWHTRTVQCQDGNRKLAKGCPLSQRPSAFKQCLLKK) form the TSP type-1 2 domain.

Zn(2+) serves as cofactor. In terms of processing, the precursor is cleaved by furin and PCSK7 outside of the cell. Glycosylated. Can be O-fucosylated by POFUT2 on a serine or a threonine residue found within the consensus sequence C1-X(2)-(S/T)-C2-G of the TSP type-1 repeat domains where C1 and C2 are the first and second cysteine residue of the repeat, respectively. Fucosylated repeats can then be further glycosylated by the addition of a beta-1,3-glucose residue by the glucosyltransferase, B3GALTL. Fucosylation mediates the efficient secretion of ADAMTS family members. Can also be C-glycosylated with one or two mannose molecules on tryptophan residues within the consensus sequence W-X-X-W of the TPRs, and N-glycosylated. These other glycosylations can also facilitate secretion. In terms of tissue distribution, expressed at low level in placenta primarily but also detected in heart and brain, cervix, uterus, bladder, esophagus, rib cartilage, chondroblastoma, fibrous tissue and a joint capsule from an arthritic patient.

It localises to the secreted. Its subcellular location is the extracellular space. The protein localises to the extracellular matrix. Its function is as follows. Metalloproteinase that plays an important role in connective tissue organization, development, inflammation and cell migration. Extracellular matrix (ECM) degrading enzyme that show proteolytic activity toward the hyalectan group of chondroitin sulfate proteoglycans (CSPGs) including ACAN, VCAN, BCAN and NCAN. Cleavage within the hyalectans occurs at Glu-Xaa recognition motifs. Plays a role in embryonic development, including limb and cardiac morphogenesis, and skeletal muscle development through its VCAN remodeling properties. Cleaves VCAN in the pericellular matrix surrounding myoblasts, facilitating myoblast contact and fusion which is required for skeletal muscle development and regeneration. Participates in development of brown adipose tissue and browning of white adipose tissue. Plays an important role for T-lymphocyte migration from draining lymph nodes following viral infection. This is A disintegrin and metalloproteinase with thrombospondin motifs 5 (ADAMTS5) from Homo sapiens (Human).